Here is a 515-residue protein sequence, read N- to C-terminus: Protein FAM98A (515 aa).

Disordered stretches follow at residues 297 to 410 (VLMG…GYHG) and 432 to 515 (SGYQ…HYTS). The segment covering 302–311 (VPDRGGRPNE) has biased composition (basic and acidic residues). The span at 382 to 394 (WTDGGSGSGGGYQ) shows a compositional bias: gly residues. The segment covering 444-456 (RYQDGGHHGERGS) has biased composition (basic and acidic residues). Residues 457–481 (GRGGRGGRGGRGGRGSQGGGWGGRG) are compositionally biased toward gly residues. Residues 485–501 (YHQGGQFEQHFQHGGYQ) show a composition bias toward low complexity. The segment covering 502 to 515 (YSHSGFGQGRHYTS) has biased composition (polar residues).

Belongs to the FAM98 family. Interacts (via N- and C-terminus) with DDX1. Interacts (via N- and C-terminus) with C14orf166. Interacts with FAM98B. Interacts with PLEKHM1 (via N- and C-terminus).

Positively stimulates PRMT1-induced protein arginine methylation. Involved in skeletal homeostasis. Positively regulates lysosome peripheral distribution and ruffled border formation in osteoclasts. This is Protein FAM98A from Mus musculus (Mouse).